Here is a 360-residue protein sequence, read N- to C-terminus: Nucleoporin SEH1 (360 aa).

WD repeat units follow at residues 10–49 (DHKD…EWHC), 55–96 (THSG…SNDK), 111–152 (DSRT…NLSQ), 160–210 (SCKL…RKYA), 217–258 (TVTD…KELT), and 276–315 (NHNS…NWKC). K12 participates in a covalent cross-link: Glycyl lysine isopeptide (Lys-Gly) (interchain with G-Cter in SUMO2). Phosphoserine is present on S190. A compositionally biased stretch (low complexity) spans 324-342 (SPVNGSSQQGNSNPSVGSN). A disordered region spans residues 324–360 (SPVNGSSQQGNSNPSVGSNIPSLQNSLNGSSAGRKHS). Positions 343-354 (IPSLQNSLNGSS) are enriched in polar residues.

Belongs to the WD repeat SEC13 family. As to quaternary structure, component of the Nup107-160 subcomplex of the nuclear pore complex (NPC). The Nup107-160 subcomplex includes NUP160, NUP133, NUP107, NUP98, NUP85, NUP43, NUP37, SEH1 and SEC13. The SEH1 subunit appears to be only weakly associated with the Nup107-160 subcomplex. Component of the GATOR2 subcomplex, composed of MIOS, SEC13, SEH1L, WDR24 and WDR59. The GATOR2 complex interacts with CASTOR1 and CASTOR2; the interaction is negatively regulated by arginine. The GATOR2 complex interacts with SESN1, SESN2 and SESN3; the interaction is negatively regulated by amino acids. SESN1, SESN2 and SESN3 convey leucine availability via direct interaction with SEH1L and WDR24.

Its subcellular location is the chromosome. It is found in the centromere. It localises to the kinetochore. The protein localises to the nucleus. The protein resides in the nuclear pore complex. Its subcellular location is the lysosome membrane. Its activity is regulated as follows. The GATOR2 complex is negatively regulated by the upstream amino acid sensors CASTOR1 and SESN2, which sequester the GATOR2 complex in absence of amino acids. In the presence of abundant amino acids, GATOR2 is released from CASTOR1 and SESN2 and activated. Component of the Nup107-160 subcomplex of the nuclear pore complex (NPC). The Nup107-160 subcomplex is required for the assembly of a functional NPC. The Nup107-160 subcomplex is also required for normal kinetochore microtubule attachment, mitotic progression and chromosome segregation. This subunit plays a role in recruitment of the Nup107-160 subcomplex to the kinetochore. In terms of biological role, as a component of the GATOR2 complex, functions as an activator of the amino acid-sensing branch of the mTORC1 signaling pathway. The GATOR2 complex indirectly activates mTORC1 through the inhibition of the GATOR1 subcomplex. GATOR2 probably acts as an E3 ubiquitin-protein ligase toward GATOR1. In the presence of abundant amino acids, the GATOR2 complex mediates ubiquitination of the NPRL2 core component of the GATOR1 complex, leading to GATOR1 inactivation. In the absence of amino acids, GATOR2 is inhibited, activating the GATOR1 complex. Within the GATOR2 complex, SEC13 and SEH1L are required to stabilize the complex. The chain is Nucleoporin SEH1 (SEH1L) from Bos taurus (Bovine).